We begin with the raw amino-acid sequence, 299 residues long: DNA repair protein RecO (299 aa).

The interval 1–62 is disordered; the sequence is MTLNSDADPD…GRRAPRTPAS (62 aa). Low complexity predominate over residues 25–41; sequence ASKPARSTRKSSSAKSA.

Belongs to the RecO family.

In terms of biological role, involved in DNA repair and RecF pathway recombination. The chain is DNA repair protein RecO from Paraburkholderia xenovorans (strain LB400).